The following is a 304-amino-acid chain: Putative S-adenosyl-L-methionine-dependent methyltransferase MAP_4189c (304 aa).

S-adenosyl-L-methionine-binding positions include aspartate 130 and 159-160 (DL).

It belongs to the UPF0677 family.

Functionally, exhibits S-adenosyl-L-methionine-dependent methyltransferase activity. This is Putative S-adenosyl-L-methionine-dependent methyltransferase MAP_4189c from Mycolicibacterium paratuberculosis (strain ATCC BAA-968 / K-10) (Mycobacterium paratuberculosis).